The sequence spans 403 residues: Anti-sigma-I factor RsgI8 (403 aa).

Over 1–59 the chain is Cytoplasmic; it reads MTKQKGTILKLKNNLAIIMTSDCKIVSIKRQPGMYEGLEISFNKNEIINKKNKLAFYSR. The RsgI N-terminal anti-sigma domain maps to 4-51; that stretch reads QKGTILKLKNNLAIIMTSDCKIVSIKRQPGMYEGLEISFNKNEIINKK. The chain crosses the membrane as a helical span at residues 60-80; it reads IAAGIAAIFIIMVISFNLFNN. Over 81–403 the chain is Extracellular; it reads NDVYAYVAID…KAKNSIEKMP (323 aa). Composition is skewed to basic and acidic residues over residues 254–314, 324–335, and 349–403; these read VHNV…EPAK, LPKDKTIPEEKT, and VEPK…EKMP. The interval 254-403 is disordered; that stretch reads VHNVKKEEPK…KAKNSIEKMP (150 aa).

In terms of assembly, interacts (via RsgI N-terminal anti-sigma domain) with SigI8.

Its subcellular location is the cell membrane. Its function is as follows. Anti-sigma factor for SigI8. Negatively regulates SigI8 activity through direct interaction. The chain is Anti-sigma-I factor RsgI8 from Acetivibrio thermocellus (strain ATCC 27405 / DSM 1237 / JCM 9322 / NBRC 103400 / NCIMB 10682 / NRRL B-4536 / VPI 7372) (Clostridium thermocellum).